Here is a 320-residue protein sequence, read N- to C-terminus: L-lactate dehydrogenase (320 aa).

Residues Val18, Asp39, Arg44, Tyr69, and 83–84 (GA) contribute to the NAD(+) site. Substrate-binding residues include Gln86 and Arg92. NAD(+) contacts are provided by residues Ser105, 122–124 (AAN), and Ser147. Position 124 to 127 (124 to 127 (NPVD)) interacts with substrate. Substrate is bound at residue 152 to 155 (DSSR). His179 acts as the Proton acceptor in catalysis. Position 223 is a phosphotyrosine (Tyr223). Thr232 contacts substrate.

The protein belongs to the LDH/MDH superfamily. LDH family. In terms of assembly, homotetramer.

The protein resides in the cytoplasm. The catalysed reaction is (S)-lactate + NAD(+) = pyruvate + NADH + H(+). Its pathway is fermentation; pyruvate fermentation to lactate; (S)-lactate from pyruvate: step 1/1. The quaternary structure is constitutionally similar to the active conformation of allosteric LDHs, and the regulation is independent of the fructose 1,6-bisphosphate-binding site. Its function is as follows. Catalyzes the conversion of lactate to pyruvate. This Lactiplantibacillus pentosus (Lactobacillus pentosus) protein is L-lactate dehydrogenase.